Reading from the N-terminus, the 322-residue chain is Ferrochelatase (322 aa).

Fe cation is bound by residues His-193 and Glu-274.

The protein belongs to the ferrochelatase family.

The protein resides in the cytoplasm. It carries out the reaction heme b + 2 H(+) = protoporphyrin IX + Fe(2+). It functions in the pathway porphyrin-containing compound metabolism; protoheme biosynthesis; protoheme from protoporphyrin-IX: step 1/1. Functionally, catalyzes the ferrous insertion into protoporphyrin IX. The polypeptide is Ferrochelatase (Photobacterium profundum (strain SS9)).